Consider the following 72-residue polypeptide: Disintegrin cereberin (72 aa).

Positions glutamate 1–histidine 72 constitute a Disintegrin domain. 6 disulfide bridges follow: cysteine 6–cysteine 21, cysteine 8–cysteine 16, cysteine 15–cysteine 38, cysteine 29–cysteine 35, cysteine 34–cysteine 59, and cysteine 47–cysteine 66. Residues arginine 51 to aspartate 53 carry the Cell attachment site motif. Residues arginine 51–histidine 72 are disordered.

Belongs to the venom metalloproteinase (M12B) family. P-II subfamily. P-IIa sub-subfamily. Monomer (disintegrin). Expressed by the venom gland.

Its subcellular location is the secreted. In terms of biological role, inhibits fibrinogen interaction with platelet. Acts by binding to alpha-IIb/beta-3 (ITGA2B/ITGB3) on the platelet surface and inhibits aggregation induced by ADP, thrombin, platelet-activating factor and collagen. The sequence is that of Disintegrin cereberin from Crotalus cerberus (Arizona black rattlesnake).